A 130-amino-acid chain; its full sequence is 29 kDa protein (130 aa).

Residues 100 to 130 (YDGPYRPATTRPKSLVSSEDVKGASKKKNSS) are disordered.

This is 29 kDa protein from Beta vulgaris (Sugar beet).